The primary structure comprises 110 residues: Parvalbumin alpha (110 aa).

EF-hand domains lie at 39 to 74 (KGPD…FTPN) and 78 to 110 (LSVK…VSES). The Ca(2+) site is built by aspartate 52, aspartate 54, serine 56, phenylalanine 58, glutamate 60, glutamate 63, aspartate 91, aspartate 93, aspartate 95, lysine 97, and glutamate 102.

Belongs to the parvalbumin family.

Functionally, in muscle, parvalbumin is thought to be involved in relaxation after contraction. It binds two calcium ions. This is Parvalbumin alpha from Aquarana catesbeiana (American bullfrog).